The following is a 375-amino-acid chain: Chaperone protein DnaJ (375 aa).

One can recognise a J domain in the interval 5 to 70; it reads DYYELLGISR…EKRAAYDQYG (66 aa). A CR-type zinc finger spans residues 132–210; that stretch reads GTTKDIKIHT…CHGDGRVNKA (79 aa). Residues C145, C148, C162, C165, C184, C187, C198, and C201 each coordinate Zn(2+). 4 CXXCXGXG motif repeats span residues 145–152, 162–169, 184–191, and 198–205; these read CDTCHGTG, CPHCHGAG, CHFCHGTG, and CKTCHGDG.

This sequence belongs to the DnaJ family. As to quaternary structure, homodimer. It depends on Zn(2+) as a cofactor.

The protein resides in the cytoplasm. Participates actively in the response to hyperosmotic and heat shock by preventing the aggregation of stress-denatured proteins and by disaggregating proteins, also in an autonomous, DnaK-independent fashion. Unfolded proteins bind initially to DnaJ; upon interaction with the DnaJ-bound protein, DnaK hydrolyzes its bound ATP, resulting in the formation of a stable complex. GrpE releases ADP from DnaK; ATP binding to DnaK triggers the release of the substrate protein, thus completing the reaction cycle. Several rounds of ATP-dependent interactions between DnaJ, DnaK and GrpE are required for fully efficient folding. Also involved, together with DnaK and GrpE, in the DNA replication of plasmids through activation of initiation proteins. The sequence is that of Chaperone protein DnaJ from Aggregatibacter actinomycetemcomitans (Actinobacillus actinomycetemcomitans).